The sequence spans 25 residues: ATP synthase subunit alpha, mitochondrial (25 aa).

The protein belongs to the ATPase alpha/beta chains family. As to quaternary structure, F-type ATPases have 2 components, CF(1) - the catalytic core - and CF(0) - the membrane proton channel. CF(1) has five subunits: alpha(3), beta(3), gamma(1), delta(1), epsilon(1). CF(0) has three main subunits: a, b and c.

The protein resides in the mitochondrion. It localises to the mitochondrion inner membrane. In terms of biological role, mitochondrial membrane ATP synthase (F(1)F(0) ATP synthase or Complex V) produces ATP from ADP in the presence of a proton gradient across the membrane which is generated by electron transport complexes of the respiratory chain. F-type ATPases consist of two structural domains, F(1) - containing the extramembraneous catalytic core, and F(0) - containing the membrane proton channel, linked together by a central stalk and a peripheral stalk. During catalysis, ATP synthesis in the catalytic domain of F(1) is coupled via a rotary mechanism of the central stalk subunits to proton translocation. Subunits alpha and beta form the catalytic core in F(1). Rotation of the central stalk against the surrounding alpha(3)beta(3) subunits leads to hydrolysis of ATP in three separate catalytic sites on the beta subunits. Subunit alpha does not bear the catalytic high-affinity ATP-binding sites. The polypeptide is ATP synthase subunit alpha, mitochondrial (ATPA) (Spinacia oleracea (Spinach)).